We begin with the raw amino-acid sequence, 72 residues long: Large ribosomal subunit protein uL29 (72 aa).

Belongs to the universal ribosomal protein uL29 family.

This is Large ribosomal subunit protein uL29 from Chlamydia felis (strain Fe/C-56) (Chlamydophila felis).